The sequence spans 246 residues: Exosome complex component Rrp41 (246 aa).

Belongs to the RNase PH family. Rrp41 subfamily. As to quaternary structure, component of the archaeal exosome complex. Forms a hexameric ring-like arrangement composed of 3 Rrp41-Rrp42 heterodimers. The hexameric ring associates with a trimer of Rrp4 and/or Csl4 subunits.

The protein resides in the cytoplasm. In terms of biological role, catalytic component of the exosome, which is a complex involved in RNA degradation. Has 3'-&gt;5' exoribonuclease activity. Can also synthesize heteromeric RNA-tails. The protein is Exosome complex component Rrp41 of Pyrobaculum aerophilum (strain ATCC 51768 / DSM 7523 / JCM 9630 / CIP 104966 / NBRC 100827 / IM2).